A 104-amino-acid chain; its full sequence is Iron-sulfur cluster assembly protein CyaY (104 aa).

Belongs to the frataxin family.

In terms of biological role, involved in iron-sulfur (Fe-S) cluster assembly. May act as a regulator of Fe-S biogenesis. In Aliivibrio fischeri (strain MJ11) (Vibrio fischeri), this protein is Iron-sulfur cluster assembly protein CyaY.